The primary structure comprises 84 residues: uncharacterized protein (84 aa).

This is an uncharacterized protein from Orgyia pseudotsugata multicapsid polyhedrosis virus (OpMNPV).